The primary structure comprises 122 residues: ATP synthase epsilon chain (122 aa).

The protein belongs to the ATPase epsilon chain family. As to quaternary structure, F-type ATPases have 2 components, CF(1) - the catalytic core - and CF(0) - the membrane proton channel. CF(1) has five subunits: alpha(3), beta(3), gamma(1), delta(1), epsilon(1). CF(0) has three main subunits: a, b and c.

The protein resides in the cell membrane. In terms of biological role, produces ATP from ADP in the presence of a proton gradient across the membrane. In Rhodococcus jostii (strain RHA1), this protein is ATP synthase epsilon chain.